Reading from the N-terminus, the 100-residue chain is Large ribosomal subunit protein bL21 (100 aa).

The protein belongs to the bacterial ribosomal protein bL21 family. In terms of assembly, part of the 50S ribosomal subunit. Contacts protein L20.

Its function is as follows. This protein binds to 23S rRNA in the presence of protein L20. The sequence is that of Large ribosomal subunit protein bL21 from Ureaplasma parvum serovar 3 (strain ATCC 27815 / 27 / NCTC 11736).